The chain runs to 647 residues: RalBP1-associated Eps domain-containing protein 2 (647 aa).

The region spanning 21-122 (EQQCYSELFA…RTESIKCELP (102 aa)) is the EH 1 domain. Residues 156-233 (EKNSFKRMDN…PSSEGPGAKP (78 aa)) are disordered. Positions 158-170 (NSFKRMDNEDKQE) are enriched in basic and acidic residues. Residues 221–230 (PEGPSSEGPG) are compositionally biased toward low complexity. The residue at position 239 (Ser239) is a Phosphoserine. The region spanning 268 to 359 (QREYYVNQFR…LQPEYLQAAF (92 aa)) is the EH 2 domain. The 36-residue stretch at 301 to 336 (LSIPELSYIWELSDADCDGALTLSEFCAAFHLIVAR) folds into the EF-hand domain. Ca(2+) contacts are provided by Asp314, Asp316, Asp318, and Glu325. Residues 402-478 (PTQDVTTADD…PRPQKTHSRA (77 aa)) are disordered. Thr466 carries the post-translational modification Phosphothreonine. Residue Ser480 is modified to Phosphoserine. A disordered region spans residues 492 to 568 (PAANSGLLPP…PENQTTESQE (77 aa)). The segment covering 499 to 510 (LPPPPALPPRPC) has biased composition (pro residues). The interval 501-647 (PPPALPPRPC…LEQLRPVTVL (147 aa)) is interaction with RALBP1. Over residues 524–539 (SQLNRAPSQAAESSPT) the composition is skewed to polar residues. Residues 548–647 (PPSKPIRRKF…LEQLRPVTVL (100 aa)) form an interaction with ASAP1 region. A coiled-coil region spans residues 599–640 (IQTAIRKNKEANAVLARLNSELQQQLKEVHQERIALENQLEQ).

Interacts with EPN1. Interacts with EPS15 AND EPS15L1. Interacts with RALBP1; can form a ternary complex with activated Ral (RALA or RALB). Interacts with ASAP1; the interaction is direct and this complex can bind paxillin. Also forms a ternary complex with RALBP1 and ASAP1. Interacts with GRB2. Tyrosine-phosphorylated upon stimulation of cells with EGF. Phosphorylation on Tyr-residues induces its association with the EGF receptor probably indirectly through an adapter like GRB2.

It localises to the cytoplasm. Its function is as follows. Involved in ligand-dependent receptor mediated endocytosis of the EGF and insulin receptors as part of the Ral signaling pathway. By controlling growth factor receptors endocytosis may regulate cell survival. Through ASAP1 may regulate cell adhesion and migration. The chain is RalBP1-associated Eps domain-containing protein 2 (Reps2) from Mus musculus (Mouse).